The primary structure comprises 132 residues: Small ribosomal subunit protein uS8 (132 aa).

Belongs to the universal ribosomal protein uS8 family. As to quaternary structure, part of the 30S ribosomal subunit. Contacts proteins S5 and S12.

Its function is as follows. One of the primary rRNA binding proteins, it binds directly to 16S rRNA central domain where it helps coordinate assembly of the platform of the 30S subunit. This is Small ribosomal subunit protein uS8 from Francisella tularensis subsp. novicida (strain U112).